The following is a 192-amino-acid chain: MLVTISGPPGSGKSTVASTLADHLSYEHISGGDIFRGLAEDRDLTLAEFNELAEEDPQIDKDLDRRLRETARGRDDIVLESRLAGWMAGEYADIKIWLDAPMSVRARRIAEREDKTPAAARAETEAREESETQRYEEYYAIDFDDITIYDLSVNTARWGPDAVTDIVLDAVDAYQAERDEGPTPIENVRYQF.

7-15 is an ATP binding site; it reads GPPGSGKST.

Belongs to the cytidylate kinase family. Type 2 subfamily.

It is found in the cytoplasm. It catalyses the reaction CMP + ATP = CDP + ADP. The enzyme catalyses dCMP + ATP = dCDP + ADP. In Halobacterium salinarum (strain ATCC 29341 / DSM 671 / R1), this protein is Cytidylate kinase.